The primary structure comprises 593 residues: Cytochrome c oxidase polypeptide 1 (593 aa).

The next 2 helical transmembrane spans lie at 5–25 (ASSI…VAVL) and 71–91 (IGIL…VSVL). His-117 lines the Fe(II)-heme a pocket. The next 6 membrane-spanning stretches (helical) occupy residues 122 to 142 (LFLF…PLLI), 154 to 174 (AIAF…FLIP), 204 to 224 (GLHL…ATIF), 246 to 266 (QSGL…MLLL), 288 to 308 (LFWF…MGIV), and 320 to 340 (LFGF…SFGV). His-294 and Tyr-298 together coordinate Cu cation. The segment at residues 294–298 (HPEVY) is a cross-link (1'-histidyl-3'-tyrosine (His-Tyr)). His-343 and His-344 together coordinate Cu cation. 5 consecutive transmembrane segments (helical) span residues 358–378 (FMAV…NWIT), 401–421 (FIIG…LILH), 425–445 (YVVG…LFAA), 467–487 (FWTA…LGYG), and 506–526 (LATV…FNMA). A heme a3-binding site is contributed by His-429. His-431 lines the Fe(II)-heme a pocket. The interval 562 to 593 (TTVLPDGGDEAQSEADAVTDGGQPAADSDTES) is disordered.

The protein belongs to the heme-copper respiratory oxidase family.

The protein resides in the cell membrane. The catalysed reaction is 4 Fe(II)-[cytochrome c] + O2 + 8 H(+)(in) = 4 Fe(III)-[cytochrome c] + 2 H2O + 4 H(+)(out). It participates in energy metabolism; oxidative phosphorylation. Cytochrome c oxidase is the component of the respiratory chain that catalyzes the reduction of oxygen to water. Subunits 1-3 form the functional core of the enzyme complex. CO I is the catalytic subunit of the enzyme. Electrons originating in cytochrome c are transferred via the copper A center of subunit 2 and heme A of subunit 1 to the bimetallic center formed by heme A3 and copper B. This is Cytochrome c oxidase polypeptide 1 (coxA2) from Halobacterium salinarum (strain ATCC 700922 / JCM 11081 / NRC-1) (Halobacterium halobium).